We begin with the raw amino-acid sequence, 512 residues long: FACT complex subunit pob3 (512 aa).

The span at 460 to 504 (LDDEDEEGDEEMEEALSEDEDFQAESESDVAEEYDENAESSDEEG) shows a compositional bias: acidic residues. Residues 460-512 (LDDEDEEGDEEMEEALSEDEDFQAESESDVAEEYDENAESSDEEGASGAEGSE) form a disordered region.

Belongs to the SSRP1 family. As to quaternary structure, forms a stable heterodimer with spt16. The spt16-pob3 dimer weakly associates with multiple molecules of nhp6 to form the FACT complex. Interacts with abo1.

The protein localises to the nucleus. The protein resides in the chromosome. Its function is as follows. Component of the FACT complex, a general chromatin factor that acts to reorganize nucleosomes. The FACT complex is involved in multiple processes that require DNA as a template such as mRNA elongation, DNA replication and DNA repair. During transcription elongation the FACT complex acts as a histone chaperone that both destabilizes and restores nucleosomal structure. It facilitates the passage of RNA polymerase II and transcription by promoting the dissociation of one histone H2A-H2B dimer from the nucleosome, then subsequently promotes the reestablishment of the nucleosome following the passage of RNA polymerase II. The sequence is that of FACT complex subunit pob3 from Schizosaccharomyces pombe (strain 972 / ATCC 24843) (Fission yeast).